An 828-amino-acid chain; its full sequence is Periplasmic nitrate reductase (828 aa).

The segment at residues 1-31 (MKLSRRSFMKANAVAAAAAAAGLSVPGVARA) is a signal peptide (tat-type signal). In terms of domain architecture, 4Fe-4S Mo/W bis-MGD-type spans 39-95 (IKWDKAPCRFCGTGCGVLVGTQQGRVVACQGDPDAPVNRGLNCIKGYFLPKIMYGKD). Residues C46, C49, C53, and C81 each contribute to the [4Fe-4S] cluster site. Mo-bis(molybdopterin guanine dinucleotide) contacts are provided by residues K83, Q150, N175, C179, 212-219 (WGSNMAEM), 243-247 (STFQH), 262-264 (QSD), M372, Q376, N482, 508-509 (SD), K531, D558, and 718-727 (TGRVLEHWHT). F794 lines the substrate pocket. Mo-bis(molybdopterin guanine dinucleotide)-binding residues include N802 and K819.

It belongs to the prokaryotic molybdopterin-containing oxidoreductase family. NasA/NapA/NarB subfamily. Component of the periplasmic nitrate reductase NapAB complex composed of NapA and NapB. The cofactor is [4Fe-4S] cluster. Mo-bis(molybdopterin guanine dinucleotide) serves as cofactor. Post-translationally, predicted to be exported by the Tat system. The position of the signal peptide cleavage has not been experimentally proven.

The protein resides in the periplasm. It carries out the reaction 2 Fe(II)-[cytochrome] + nitrate + 2 H(+) = 2 Fe(III)-[cytochrome] + nitrite + H2O. In terms of biological role, catalytic subunit of the periplasmic nitrate reductase complex NapAB. Receives electrons from NapB and catalyzes the reduction of nitrate to nitrite. The protein is Periplasmic nitrate reductase of Salmonella dublin (strain CT_02021853).